Consider the following 415-residue polypeptide: Histidine--tRNA ligase (415 aa).

It belongs to the class-II aminoacyl-tRNA synthetase family. As to quaternary structure, homodimer.

The protein resides in the cytoplasm. It carries out the reaction tRNA(His) + L-histidine + ATP = L-histidyl-tRNA(His) + AMP + diphosphate + H(+). The protein is Histidine--tRNA ligase of Rickettsia akari (strain Hartford).